The following is a 171-amino-acid chain: Orotate phosphoribosyltransferase (171 aa).

5-phospho-alpha-D-ribose 1-diphosphate-binding positions include Arg85, Lys86, Arg88, His90, and 110–118 (EDVVTTGNS). 2 residues coordinate orotate: Thr114 and Arg142.

This sequence belongs to the purine/pyrimidine phosphoribosyltransferase family. PyrE subfamily. Homodimer. Requires Mg(2+) as cofactor.

It catalyses the reaction orotidine 5'-phosphate + diphosphate = orotate + 5-phospho-alpha-D-ribose 1-diphosphate. Its pathway is pyrimidine metabolism; UMP biosynthesis via de novo pathway; UMP from orotate: step 1/2. Catalyzes the transfer of a ribosyl phosphate group from 5-phosphoribose 1-diphosphate to orotate, leading to the formation of orotidine monophosphate (OMP). This chain is Orotate phosphoribosyltransferase, found in Thermoplasma acidophilum (strain ATCC 25905 / DSM 1728 / JCM 9062 / NBRC 15155 / AMRC-C165).